A 525-amino-acid chain; its full sequence is Cyclic AMP-responsive element-binding protein 3-like protein 2 (525 aa).

Topologically, residues 1–382 are cytoplasmic; the sequence is MEIMESGDPV…SCKAAGTQTG (382 aa). Disordered regions lie at residues 85–104, 203–267, and 309–338; these read LCGD…DDNF, EALQ…QGSG, and NKIS…SSEN. Composition is skewed to polar residues over residues 90–102 and 213–239; these read RPQS…SSDD and SSHG…QSQA. The bZIP domain occupies 299-362; the sequence is ALKKIRRKIK…RTLLQQLQRL (64 aa). Residues 301 to 330 form a basic motif region; the sequence is KKIRRKIKNKISAQESRRKKKEYMDSLEKR. Residues 322-332 show a composition bias toward basic and acidic residues; that stretch reads EYMDSLEKRVE. The tract at residues 341 to 362 is leucine-zipper; it reads LRKKVEVLESTNRTLLQQLQRL. Residues 383–403 traverse the membrane as a helical; Signal-anchor for type II membrane protein segment; the sequence is TCLMMVVLCFAVIFGSFTQNL. At 404-525 the chain is on the lumenal side; sequence DMYSSSSKTI…ELDRTVNTTS (122 aa). The S1P recognition signature appears at 433–436; that stretch reads RKLL. Asn-490, Asn-509, and Asn-522 each carry an N-linked (GlcNAc...) asparagine glycan.

Belongs to the bZIP family. ATF subfamily. Binds DNA as a dimer. Upon ER stress, translocated to the Golgi apparatus, where it is processed by regulated intramembrane proteolysis (RIP) to release the cytosol-facing N-terminal transcription factor domain. The cleavage is performed sequentially by site-1 and site-2 proteases (S1P/mbtps1 and S2P/mbtps2).

It localises to the endoplasmic reticulum membrane. Its subcellular location is the nucleus. Its function is as follows. Transcription factor involved in unfolded protein response (UPR). In the absence of endoplasmic reticulum (ER) stress, inserted into ER membranes, with N-terminal DNA-binding and transcription activation domains oriented toward the cytosolic face of the membrane. In response to ER stress, transported to the Golgi, where it is cleaved in a site-specific manner by resident proteases S1P/mbtps1 and S2P/mbtps2. The released N-terminal cytosolic domain is translocated to the nucleus to effect transcription of specific target genes. Plays a critical role in chondrogenesis. May protect neuroblastoma cells from ER stress-induced death. In vitro activates transcription of target genes via direct binding to the CRE site. This chain is Cyclic AMP-responsive element-binding protein 3-like protein 2 (creb3l2), found in Xenopus laevis (African clawed frog).